Consider the following 540-residue polypeptide: Peptide chain release factor 3 (540 aa).

The region spanning 14–283 (NQRRNFAIIS…AFLDYALKPI (270 aa)) is the tr-type G domain. GTP-binding positions include 23-30 (SHPDAGKT), 91-95 (DTPGH), and 145-148 (NKLD).

This sequence belongs to the TRAFAC class translation factor GTPase superfamily. Classic translation factor GTPase family. PrfC subfamily.

The protein resides in the cytoplasm. In terms of biological role, increases the formation of ribosomal termination complexes and stimulates activities of RF-1 and RF-2. It binds guanine nucleotides and has strong preference for UGA stop codons. It may interact directly with the ribosome. The stimulation of RF-1 and RF-2 is significantly reduced by GTP and GDP, but not by GMP. The polypeptide is Peptide chain release factor 3 (Gloeothece citriformis (strain PCC 7424) (Cyanothece sp. (strain PCC 7424))).